A 195-amino-acid chain; its full sequence is UPF0314 protein RHECIAT_CH0004233 (195 aa).

Helical transmembrane passes span 15–35, 64–84, 127–147, and 150–170; these read FWFV…YLMG, WYTP…YLIL, GDSI…FFFA, and APVA…GYVI.

The protein belongs to the UPF0314 family.

Its subcellular location is the cell membrane. This is UPF0314 protein RHECIAT_CH0004233 from Rhizobium etli (strain CIAT 652).